The primary structure comprises 373 residues: P2Y purinoceptor 1 (373 aa).

Over 1–51 (MTEVLWPAVPNGTDTAFLADPGSPWGNSTVTSTAAVASPFKCALTKTGFQF) the chain is Extracellular. N-linked (GlcNAc...) asparagine glycans are attached at residues Asn-11 and Asn-27. Cystine bridges form between Cys-42–Cys-296 and Cys-124–Cys-202. Position 46 (Lys-46) interacts with ADP. Residues 52-74 (YYLPAVYILVFIIGFLGNSVAIW) form a helical membrane-spanning segment. Topologically, residues 75–87 (MFVFHMKPWSGIS) are cytoplasmic. The helical transmembrane segment at 88–109 (VYMFNLALADFLYVLTLPALIF) threads the bilayer. Residues 110–125 (YYFNKTDWIFGDAMCK) lie on the Extracellular side of the membrane. An N-linked (GlcNAc...) asparagine glycan is attached at Asn-113. A helical membrane pass occupies residues 126–147 (LQRFIFHVNLYGSILFLTCISA). Residues 148–166 (HRYSGVVYPLKSLGRLKKK) lie on the Cytoplasmic side of the membrane. A helical membrane pass occupies residues 167-188 (NAVYISVLVWLIVVVGISPILF). Residues 189–214 (YSGTGIRKNKTITCYDTTSDEYLRSY) are Extracellular-facing. Asn-197 carries N-linked (GlcNAc...) asparagine glycosylation. 203-205 (YDT) lines the ADP pocket. Residues 215 to 237 (FIYSMCTTVAMFCVPLVLILGCY) form a helical membrane-spanning segment. The Cytoplasmic segment spans residues 238–260 (GLIVRALIYKDLDNSPLRRKSIY). The helical transmembrane segment at 261-284 (LVIIVLTVFAVSYIPFHVMKTMNL) threads the bilayer. Residues 283–287 (NLRAR), 303–306 (YATY), and Arg-310 each bind ADP. Over 285-303 (RARLDFQTPEMCAFNDRVY) the chain is Extracellular. A helical transmembrane segment spans residues 304–325 (ATYQVTRGLASLNSCVDPILYF). Over 326–373 (LAGDTFRRRLSRATRKASRRSEANLQSKSEDMTLNILSEFKQNGDTSL) the chain is Cytoplasmic.

This sequence belongs to the G-protein coupled receptor 1 family.

It localises to the cell membrane. Receptor for extracellular adenine nucleotides such as ADP. In platelets, binding to ADP leads to mobilization of intracellular calcium ions via activation of phospholipase C, a change in platelet shape, and ultimately platelet aggregation. In Bos taurus (Bovine), this protein is P2Y purinoceptor 1 (P2RY1).